The sequence spans 100 residues: Glutamyl-tRNA(Gln) amidotransferase subunit C (100 aa).

This sequence belongs to the GatC family. As to quaternary structure, heterotrimer of A, B and C subunits.

The enzyme catalyses L-glutamyl-tRNA(Gln) + L-glutamine + ATP + H2O = L-glutaminyl-tRNA(Gln) + L-glutamate + ADP + phosphate + H(+). It catalyses the reaction L-aspartyl-tRNA(Asn) + L-glutamine + ATP + H2O = L-asparaginyl-tRNA(Asn) + L-glutamate + ADP + phosphate + 2 H(+). In terms of biological role, allows the formation of correctly charged Asn-tRNA(Asn) or Gln-tRNA(Gln) through the transamidation of misacylated Asp-tRNA(Asn) or Glu-tRNA(Gln) in organisms which lack either or both of asparaginyl-tRNA or glutaminyl-tRNA synthetases. The reaction takes place in the presence of glutamine and ATP through an activated phospho-Asp-tRNA(Asn) or phospho-Glu-tRNA(Gln). This chain is Glutamyl-tRNA(Gln) amidotransferase subunit C, found in Rickettsia conorii (strain ATCC VR-613 / Malish 7).